We begin with the raw amino-acid sequence, 467 residues long: Ergochrome gene cluster transcriptional coactivator CPUR_05432 (467 aa).

The region spanning 109–179 (IAIQCEMLGS…RRGYVAHTPL (71 aa)) is the HTH iclR-type domain. The segment at residues 139 to 158 (IQDVANLSNVPEQQLAQMIG) is a DNA-binding region (H-T-H motif).

The protein localises to the nucleus. Functionally, transcriptional coactivator; part of the gene cluster responsible for the typical purple-black color of the ergot sclerotia. The ergochrome gene cluster produces several ergot pigments including the yellow ergochrome secalonic acid and its derivatives, as well as the red anthraquinones endocrocin and clavorubin. With CPUR_05433, coregulates the production of geodin. The polypeptide is Ergochrome gene cluster transcriptional coactivator CPUR_05432 (Claviceps purpurea (strain 20.1) (Ergot fungus)).